We begin with the raw amino-acid sequence, 509 residues long: Photosystem II CP47 reaction center protein (509 aa).

6 helical membrane passes run 21–36 (SVHI…WAGS), 101–115 (IVFS…IWHW), 140–156 (GIHL…FGAF), 203–218 (IAAG…FHLS), 237–252 (VLSS…AFVV), and 457–472 (SFAL…HGAR).

This sequence belongs to the PsbB/PsbC family. PsbB subfamily. As to quaternary structure, PSII is composed of 1 copy each of membrane proteins PsbA, PsbB, PsbC, PsbD, PsbE, PsbF, PsbH, PsbI, PsbJ, PsbK, PsbL, PsbM, PsbT, PsbX, PsbY, PsbZ, Psb30/Ycf12, at least 3 peripheral proteins of the oxygen-evolving complex and a large number of cofactors. It forms dimeric complexes. Binds multiple chlorophylls. PSII binds additional chlorophylls, carotenoids and specific lipids. is required as a cofactor.

Its subcellular location is the plastid. It localises to the chloroplast thylakoid membrane. One of the components of the core complex of photosystem II (PSII). It binds chlorophyll and helps catalyze the primary light-induced photochemical processes of PSII. PSII is a light-driven water:plastoquinone oxidoreductase, using light energy to abstract electrons from H(2)O, generating O(2) and a proton gradient subsequently used for ATP formation. This is Photosystem II CP47 reaction center protein from Cicer arietinum (Chickpea).